Consider the following 306-residue polypeptide: Putative syntaxin-3 (306 aa).

At 1-279 (MPRDRLKELQ…QKRARKMKVC (279 aa)) the chain is on the cytoplasmic side. The interval 40 to 180 (QDADFEMFLE…QLSDEEIENA (141 aa)) is required for the regulation of the defecation motor program. Residues 204–266 (YDEVKSRADE…KQARGNVEEA (63 aa)) enclose the t-SNARE coiled-coil homology domain. Residues 280 to 300 (IIIGSIIAVLILILFIQSAVC) form a helical; Anchor for type IV membrane protein membrane-spanning segment. The Extracellular portion of the chain corresponds to 301–306 (HFTPIC).

Belongs to the syntaxin family. As to expression, expressed in body wall, pharyngeal, vulval and enteric muscles and in some head neurons.

Its subcellular location is the cell membrane. Functionally, potentially involved in docking of synaptic vesicles at presynaptic active zones. Acts in the intestine to regulate anterior body muscle contractions (aBOC) and the expulsion steps during the defecation motor program (DMP). The polypeptide is Putative syntaxin-3 (Caenorhabditis elegans).